The sequence spans 224 residues: Urease accessory protein UreF (224 aa).

This sequence belongs to the UreF family. In terms of assembly, ureD, UreF and UreG form a complex that acts as a GTP-hydrolysis-dependent molecular chaperone, activating the urease apoprotein by helping to assemble the nickel containing metallocenter of UreC. The UreE protein probably delivers the nickel.

The protein resides in the cytoplasm. Its function is as follows. Required for maturation of urease via the functional incorporation of the urease nickel metallocenter. In Pseudomonas putida (strain W619), this protein is Urease accessory protein UreF.